Reading from the N-terminus, the 503-residue chain is GMP synthase [glutamine-hydrolyzing] (503 aa).

The Glutamine amidotransferase type-1 domain maps to 1 to 189; that stretch reads MVLVLDFGSQ…FLELAGVKRD (189 aa). Cys78 functions as the Nucleophile in the catalytic mechanism. Catalysis depends on residues His164 and Glu166. The 189-residue stretch at 190–378 folds into the GMPS ATP-PPase domain; the sequence is WTPEHVLEEL…LGLPDTLRLR (189 aa). Position 217-223 (217-223) interacts with ATP; the sequence is SGGVDSS.

Homodimer.

The catalysed reaction is XMP + L-glutamine + ATP + H2O = GMP + L-glutamate + AMP + diphosphate + 2 H(+). It participates in purine metabolism; GMP biosynthesis; GMP from XMP (L-Gln route): step 1/1. Its function is as follows. Catalyzes the synthesis of GMP from XMP. The protein is GMP synthase [glutamine-hydrolyzing] of Thermus thermophilus (strain ATCC 27634 / DSM 579 / HB8).